We begin with the raw amino-acid sequence, 503 residues long: Probable cytosol aminopeptidase (503 aa).

Mn(2+) contacts are provided by lysine 270 and aspartate 275. Lysine 282 is a catalytic residue. Mn(2+) contacts are provided by aspartate 293, aspartate 352, and glutamate 354. Arginine 356 is a catalytic residue.

The protein belongs to the peptidase M17 family. The cofactor is Mn(2+).

It is found in the cytoplasm. It carries out the reaction Release of an N-terminal amino acid, Xaa-|-Yaa-, in which Xaa is preferably Leu, but may be other amino acids including Pro although not Arg or Lys, and Yaa may be Pro. Amino acid amides and methyl esters are also readily hydrolyzed, but rates on arylamides are exceedingly low.. It catalyses the reaction Release of an N-terminal amino acid, preferentially leucine, but not glutamic or aspartic acids.. In terms of biological role, presumably involved in the processing and regular turnover of intracellular proteins. Catalyzes the removal of unsubstituted N-terminal amino acids from various peptides. The protein is Probable cytosol aminopeptidase of Citrobacter koseri (strain ATCC BAA-895 / CDC 4225-83 / SGSC4696).